A 295-amino-acid chain; its full sequence is MSNLKDIKRKIKSVQNTQKTTRAMKLVSTAKLRKAEEAARYSRVYALKINEVLSEIAYKINQYASVVSESKFFDIKENIEKVDIIFVTADKGLCGGFNVQTIKTVRHMIDEFKAKKIKVRLRAVGKKGIEFFNFQGVDLLETYIGASSSPTYEKAQNIIKDAIDDFVNGVTDKVILVHNGYKNMISQEIRVNDIVPIEPSKIIGVETNSLMEFEPEDNYSKILDELLTKYFEYSMYYSLIDSLAAEHSARMQAMDNATNNAKERVKQLNLAYNKARQESITTELIEIISGVESMK.

The protein belongs to the ATPase gamma chain family. In terms of assembly, F-type ATPases have 2 components, CF(1) - the catalytic core - and CF(0) - the membrane proton channel. CF(1) has five subunits: alpha(3), beta(3), gamma(1), delta(1), epsilon(1). CF(0) has three main subunits: a, b and c.

It localises to the cell inner membrane. Functionally, produces ATP from ADP in the presence of a proton gradient across the membrane. The gamma chain is believed to be important in regulating ATPase activity and the flow of protons through the CF(0) complex. This chain is ATP synthase gamma chain, found in Campylobacter curvus (strain 525.92).